Reading from the N-terminus, the 255-residue chain is Hemin import ATP-binding protein HmuV (255 aa).

The ABC transporter domain occupies 2 to 238 (LRVENLHVRR…EPLKAVFGLE (237 aa)). Residue 34-41 (GPNGAGKS) participates in ATP binding.

It belongs to the ABC transporter superfamily. Heme (hemin) importer (TC 3.A.1.14.5) family. As to quaternary structure, the complex is composed of two ATP-binding proteins (HmuV), two transmembrane proteins (HmuU) and a solute-binding protein (HmuT).

The protein resides in the cell inner membrane. Its function is as follows. Part of the ABC transporter complex HmuTUV involved in hemin import. Responsible for energy coupling to the transport system. In Pseudomonas fluorescens (strain ATCC BAA-477 / NRRL B-23932 / Pf-5), this protein is Hemin import ATP-binding protein HmuV.